The primary structure comprises 323 residues: Aquaporin-4 (323 aa).

Topologically, residues 1-36 are cytoplasmic; the sequence is MSDRPAARRWGKCGPLCTRESIMVAFKGVWTQTFWK. S-palmitoyl cysteine attachment occurs at residues Cys13 and Cys17. Residues 37-57 traverse the membrane as a helical segment; sequence AVTAEFLAMLIFVLLSLGSTI. At 58–69 the chain is on the extracellular side; sequence NWGGAEKPLPVD. The helical transmembrane segment at 70 to 89 threads the bilayer; sequence MVLISLCFGLSIATMVQCFG. Over 90-93 the chain is Cytoplasmic; it reads HISG. The segment at residues 94–101 is an intramembrane region (discontinuously helical); the sequence is GHINPAVT. The NPA 1 motif lies at 97-99; sequence NPA. Residues 102–115 are Cytoplasmic-facing; that stretch reads VAMVCTRRISIAKS. Residue Ser111 is modified to Phosphoserine; by PKG. Residues 116–136 form a helical membrane-spanning segment; sequence VFYIAAQCLGAIIGAGILYLV. Over 137-155 the chain is Extracellular; that stretch reads TPPSVVGGLGVTTVHGNLS. N-linked (GlcNAc...) asparagine glycosylation is present at Asn153. The helical transmembrane segment at 156-176 threads the bilayer; that stretch reads AGHGLLVELIITFQLVFTIFA. The Cytoplasmic portion of the chain corresponds to 177-184; that stretch reads SCDSKRTD. Phosphoserine; by PKC is present on Ser180. A helical transmembrane segment spans residues 185–205; that stretch reads VTGSIALAIGISVAIGHLFAI. An N-linked (GlcNAc...) asparagine glycan is attached at Asn206. Residues 206–208 are Extracellular-facing; sequence NYT. Residues 209 to 222 constitute an intramembrane region (discontinuously helical); it reads GASMNPARSFGPAV. The short motif at 213-215 is the NPA 2 element; that stretch reads NPA. Over 223–231 the chain is Extracellular; that stretch reads IMGNWENHW. Residues 232-252 traverse the membrane as a helical segment; sequence IYWVGPIIGAVLAGGLYEYVF. At 253–323 the chain is on the cytoplasmic side; that stretch reads CPDVELKRRF…DPSGEVLSSV (71 aa). Ser276 and Ser285 each carry phosphoserine. The residue at position 289 (Thr289) is a Phosphothreonine. A Phosphoserine modification is found at Ser321.

It belongs to the MIP/aquaporin (TC 1.A.8) family. In terms of assembly, homotetramer. The tetramers can form oligomeric arrays in membranes. The size of the oligomers differs between tissues and is smaller in skeletal muscle than in brain. Interaction between AQP4 oligomeric arrays in close-by cells can contribute to cell-cell adhesion. Part of a complex containing MLC1, TRPV4, HEPACAM and ATP1B1. Post-translationally, phosphorylation by PKC at Ser-180 reduces conductance by 50%. Phosphorylation by PKG at Ser-111 in response to glutamate increases conductance by 40%. In terms of processing, isoform 2: Palmitoylated on its N-terminal region. Isoform 1: Not palmitoylated. In terms of tissue distribution, detected in brain and lung.

Its subcellular location is the cell membrane. The protein localises to the basolateral cell membrane. It localises to the endosome membrane. The protein resides in the sarcolemma. It is found in the cell projection. It carries out the reaction H2O(in) = H2O(out). Forms a water-specific channel. Plays an important role in brain water homeostasis and in glymphatic solute transport. Required for a normal rate of water exchange across the blood brain interface. Required for normal levels of cerebrospinal fluid influx into the brain cortex and parenchyma along paravascular spaces that surround penetrating arteries, and for normal drainage of interstitial fluid along paravenous drainage pathways. Thereby, it is required for normal clearance of solutes from the brain interstitial fluid, including soluble beta-amyloid peptides derived from APP. Plays a redundant role in urinary water homeostasis and urinary concentrating ability. In Bos taurus (Bovine), this protein is Aquaporin-4 (AQP4).